The sequence spans 368 residues: Quinolinate synthase (368 aa).

Iminosuccinate contacts are provided by His46 and Ser63. Residue Cys110 participates in [4Fe-4S] cluster binding. Residues 141–143 (YVN) and Ser162 contribute to the iminosuccinate site. Residue Cys230 participates in [4Fe-4S] cluster binding. Iminosuccinate is bound by residues 256-258 (HPE) and Thr273. [4Fe-4S] cluster is bound at residue Cys320.

It belongs to the quinolinate synthase family. Type 3 subfamily. [4Fe-4S] cluster serves as cofactor.

The protein resides in the cytoplasm. The enzyme catalyses iminosuccinate + dihydroxyacetone phosphate = quinolinate + phosphate + 2 H2O + H(+). The protein operates within cofactor biosynthesis; NAD(+) biosynthesis; quinolinate from iminoaspartate: step 1/1. Its function is as follows. Catalyzes the condensation of iminoaspartate with dihydroxyacetone phosphate to form quinolinate. In Bacillus cereus (strain G9842), this protein is Quinolinate synthase.